The following is a 464-amino-acid chain: Dihydrolipoyllysine-residue succinyltransferase component of 2-oxoglutarate dehydrogenase complex 1, mitochondrial (464 aa).

Residues 1 to 86 (MMLRAVFRRA…TALQRWVRPF (86 aa)) constitute a mitochondrion transit peptide. One can recognise a Lipoyl-binding domain in the interval 93 to 168 (VVEAVVPHMG…EPGNKVARIS (76 aa)). Lys-134 is modified (N6-lipoyllysine). A disordered region spans residues 168–242 (STSADAVSHV…DRERRVPMTR (75 aa)). Residues 196–210 (EKPKVESTKVAEKPK) show a composition bias toward basic and acidic residues. Positions 211–220 (APSPPPPPPS) are enriched in pro residues. Residues His-435 and Asp-439 contribute to the active site.

It belongs to the 2-oxoacid dehydrogenase family. As to quaternary structure, forms a 24-polypeptide structural core with octahedral symmetry. Requires (R)-lipoate as cofactor.

It is found in the mitochondrion. It carries out the reaction N(6)-[(R)-dihydrolipoyl]-L-lysyl-[protein] + succinyl-CoA = N(6)-[(R)-S(8)-succinyldihydrolipoyl]-L-lysyl-[protein] + CoA. Its pathway is amino-acid degradation; L-lysine degradation via saccharopine pathway; glutaryl-CoA from L-lysine: step 6/6. The 2-oxoglutarate dehydrogenase complex catalyzes the overall conversion of 2-oxoglutarate to succinyl-CoA and CO(2). It contains multiple copies of three enzymatic components: 2-oxoglutarate dehydrogenase (E1), dihydrolipoamide succinyltransferase (E2) and lipoamide dehydrogenase (E3). The chain is Dihydrolipoyllysine-residue succinyltransferase component of 2-oxoglutarate dehydrogenase complex 1, mitochondrial from Arabidopsis thaliana (Mouse-ear cress).